The sequence spans 249 residues: Probable septum site-determining protein MinC (249 aa).

Residues 89–130 (SLFEPGMPPAMKGGRPAPDFEVPEVDPADPPKAGKGKAAAPI) form a disordered region. The span at 119 to 129 (PKAGKGKAAAP) shows a compositional bias: low complexity.

The protein belongs to the MinC family. As to quaternary structure, interacts with MinD and FtsZ.

In terms of biological role, cell division inhibitor that blocks the formation of polar Z ring septums. Rapidly oscillates between the poles of the cell to destabilize FtsZ filaments that have formed before they mature into polar Z rings. Prevents FtsZ polymerization. The chain is Probable septum site-determining protein MinC from Rhizobium meliloti (strain 1021) (Ensifer meliloti).